Here is a 1139-residue protein sequence, read N- to C-terminus: MRECIISWTLLLCLSCVKSFNLDVNAPIYRYGPSGTNFGYSVAEHFKGDKPVMLIGAPRGESGQTGTERAGAMYACDINTFYNGGSNHWCEQVRFEYENVEDYAKRPNETRGRTVHPLGKNDQLLASTIVSKGTKNGSALVCAPLIRYHQTAAYPQGACYELESNLRLQSTYATCAQKNLPTTDRHNEYGGCMEGFSAAITQDTIVTGLIGAVKWTGGVFAKKSSANIFDSVVEKYTMNQPNGDMIRTRLVAHDYLGYSVDIGRFGFWYEDGKPITVVSGATRYGEHGAVIFLPFIQDSSSKLTLNEDKFIINGTAMGSAFGYSIEVVDLNGDGFDDLIVGAPFEHRSGIDGNFGGIVYVYFSQGVQRKQHESHLVFHPPKILKNPDFYSQFGLSITKLGNVDGDKSKLNDFAVGAPFAFDGAGAVYIYLGTKNIEKFRKKPAQVIKGNDLPNLPPGGMRSFGFSLSGGSDMDENGYPDLLIGSPSKNFVALLRSRPVISIETKHKMEKRMVDIDKGVNCPRGAKTCFPLDMVIYVDEETKRGAELVDFSSDVFMCNLEAIPFRADTTARGFIEGSHSHNYSWPCGSNSHVQKRTYRQLIYLPVQESKDWITPLKFRFTVSIRNEKKPVQPPQGSQLVDLKHYPVLNKYGASYEFDVPFNTLCGEDHTCQTDLSLKAAFKDIPLTSNGYVSNVGEKDYLDLTFTVENKKEKAYQANFYLEYNEEELELPQVQGSKRMIAETIGKNIVHLPLGNPMNGASKHQFTIQFKLTRGRTEGIGKALKFMAHVNSTSQETEEELKDNKWEAEVQIIKKAELEIYGISDPDRVFFGGKARAESELELEEDIGTMVRHNYTIINHGPWTVRNVEAHISWPYQLRSRFGRGKNALYLLDVPTITTEFTDGTSEVRKCFIKQQYEYVNPAEIKLNTKYSTQETAPHRVEHRMKREIDEDEEEQSDDLGAVEENIPWFSTANFWNLFAIKGGDGRPREVKHLSCQDNTANCFTVICHFDFIDANSAVVIDLRARLWNATFIEDYSDVESVKIRSFGKLQLDESQGIDDDPNNNAAFVETSADPDRPTIGDSRPIPWWIYVIAAVIGVLILSLIIICLSKCGFFKRNRLDQPSLYTAQLKHEREEWADTGL.

Residues 1-19 (MRECIISWTLLLCLSCVKS) form the signal peptide. The Extracellular segment spans residues 20-1084 (FNLDVNAPIY…PTIGDSRPIP (1065 aa)). An FG-GAP 1 repeat occupies 21–85 (NLDVNAPIYR…CDINTFYNGG (65 aa)). 2 N-linked (GlcNAc...) asparagine glycosylation sites follow: Asn-108 and Asn-136. 6 FG-GAP repeats span residues 111-171 (RGRT…LQST), 180-231 (LPTT…IFDS), 242-302 (NGDM…SSSK), 307-370 (EDKF…QRKQ), 378-438 (HPPK…IEKF), and 448-510 (GNDL…MEKR). Asn-313 carries an N-linked (GlcNAc...) asparagine glycan. Asn-580, Asn-788, Asn-851, and Asn-1026 each carry an N-linked (GlcNAc...) asparagine glycan. A helical membrane pass occupies residues 1085 to 1106 (WWIYVIAAVIGVLILSLIIICL). At 1107 to 1139 (SKCGFFKRNRLDQPSLYTAQLKHEREEWADTGL) the chain is on the cytoplasmic side.

This sequence belongs to the integrin alpha chain family. In terms of assembly, heterodimer of an alpha and a beta subunit. Alpha ina-1 associates with beta pat-3. Interacts (via cytoplasmic domain) with src-1 (when phosphorylated at 'Tyr-416').

The protein localises to the membrane. It is found in the cell projection. It localises to the phagocytic cup. Its subcellular location is the cytoplasmic vesicle. The protein resides in the phagosome membrane. Plays a role in cell migration, axon fasciculation, and morphogenesis. During gonad morphogenesis, involved in distal tip cell (DTC)-mediated guidance of gonad elongation, in maintaining their sharp tapering morphology and in their migration. Involved in the anterior-posterior positioning of QR neuroblast descendants by regulating the migratory speed of QR.p. Probably by acting as a receptor for apoptotic cells, plays a role in the clearance of apoptotic cells during mid-embryogenesis. The polypeptide is Integrin alpha ina-1 (ina-1) (Caenorhabditis elegans).